We begin with the raw amino-acid sequence, 547 residues long: Chaperonin GroEL (547 aa).

Residues 30-33 (TLGP), lysine 51, 87-91 (DGTTT), glycine 415, 479-481 (NAA), and aspartate 495 contribute to the ATP site.

The protein belongs to the chaperonin (HSP60) family. In terms of assembly, forms a cylinder of 14 subunits composed of two heptameric rings stacked back-to-back. Interacts with the co-chaperonin GroES.

Its subcellular location is the cytoplasm. The enzyme catalyses ATP + H2O + a folded polypeptide = ADP + phosphate + an unfolded polypeptide.. Functionally, together with its co-chaperonin GroES, plays an essential role in assisting protein folding. The GroEL-GroES system forms a nano-cage that allows encapsulation of the non-native substrate proteins and provides a physical environment optimized to promote and accelerate protein folding. The sequence is that of Chaperonin GroEL from Cupriavidus taiwanensis (strain DSM 17343 / BCRC 17206 / CCUG 44338 / CIP 107171 / LMG 19424 / R1) (Ralstonia taiwanensis (strain LMG 19424)).